A 284-amino-acid chain; its full sequence is Bifunctional protein FolD (284 aa).

NADP(+)-binding positions include 166–168 and isoleucine 232; that span reads GAS.

The protein belongs to the tetrahydrofolate dehydrogenase/cyclohydrolase family. As to quaternary structure, homodimer.

The enzyme catalyses (6R)-5,10-methylene-5,6,7,8-tetrahydrofolate + NADP(+) = (6R)-5,10-methenyltetrahydrofolate + NADPH. It carries out the reaction (6R)-5,10-methenyltetrahydrofolate + H2O = (6R)-10-formyltetrahydrofolate + H(+). It participates in one-carbon metabolism; tetrahydrofolate interconversion. Catalyzes the oxidation of 5,10-methylenetetrahydrofolate to 5,10-methenyltetrahydrofolate and then the hydrolysis of 5,10-methenyltetrahydrofolate to 10-formyltetrahydrofolate. The chain is Bifunctional protein FolD from Shewanella frigidimarina (strain NCIMB 400).